A 58-amino-acid polypeptide reads, in one-letter code: VIEPKCYKYEGKKCPPDINPVCGTDKRTYYNECALCVFIRQSTKKADKAIKIKKWGKC.

Residues Val-1–Cys-58 form the Kazal-like domain. Cystine bridges form between Cys-6–Cys-36, Cys-14–Cys-33, and Cys-22–Cys-58.

In terms of assembly, monomer. As to expression, skin.

It is found in the secreted. Has antibacterial activity against Gram-negative bacterium E.coli ATCC 11229. Shows hemagglutinating activity. Inhibits prolyl endopeptidase, but not trypsin, chymotrypsin, V8 protease and proteinase K. May have a role in mucosal defense against microbes by interacting directly with their membranes. The polypeptide is Proteinase inhibitor PSKP-1 (Phyllomedusa sauvagei (Sauvage's leaf frog)).